The sequence spans 198 residues: Thymidine kinase (198 aa).

Residues 9-16 (STMNAGKS) and 87-90 (DEAQ) each bind ATP. The active-site Proton acceptor is E88. 4 residues coordinate Zn(2+): C145, C147, C182, and H185.

Belongs to the thymidine kinase family. In terms of assembly, homotetramer.

The protein localises to the cytoplasm. It carries out the reaction thymidine + ATP = dTMP + ADP + H(+). This is Thymidine kinase from Ruegeria pomeroyi (strain ATCC 700808 / DSM 15171 / DSS-3) (Silicibacter pomeroyi).